The chain runs to 524 residues: MIKQALLSVSDKTGIVDFARELNALGVTLLSTGGTAKLLADSGLPVTEVADYTGFPEMLDGRVKTLHPKVHGGILARRDLPEHMAALAEHDIPTIDLLVVNLYPFQQTVAKDDCTLPDAIENIDIGGPTMLRSAAKNHRDVTVIVDPADYAVVLDEMRANANSVGYDTNFRLATKVFAHTAQYDGAITNYLTSLGADKSHQGRSAYPQTLNLAFDKVQEMRYGENPHQSAAFYRDLRAVDGALANYVQLQGKELSYNNIADADAAWECVKSFDAASGAACVIIKHANPCGVALGANALEAYDKAFKTDSTSAFGGIIAFNVELDETAAQAVARQFVEVLIAPSFSAGARAVFAAKQNVRLLEIPLGQGINQYDFKRVGGGLLVQSPDARNVQPSELRVVTRRHPNPKEMDDLMFAWRVAKFVKSNAIVFCGGGMTLGVGAGQMSRVDSARIASIKAQNAGLTLAGSAVASDAFFPFRDGLDVVVDAGATCVIQPGGSMRDDEVIAAADERGIAMVVTGTRHFRH.

Positions 1-145 constitute an MGS-like domain; it reads MIKQALLSVS…KNHRDVTVIV (145 aa).

The protein belongs to the PurH family.

The catalysed reaction is (6R)-10-formyltetrahydrofolate + 5-amino-1-(5-phospho-beta-D-ribosyl)imidazole-4-carboxamide = 5-formamido-1-(5-phospho-D-ribosyl)imidazole-4-carboxamide + (6S)-5,6,7,8-tetrahydrofolate. It catalyses the reaction IMP + H2O = 5-formamido-1-(5-phospho-D-ribosyl)imidazole-4-carboxamide. It functions in the pathway purine metabolism; IMP biosynthesis via de novo pathway; 5-formamido-1-(5-phospho-D-ribosyl)imidazole-4-carboxamide from 5-amino-1-(5-phospho-D-ribosyl)imidazole-4-carboxamide (10-formyl THF route): step 1/1. It participates in purine metabolism; IMP biosynthesis via de novo pathway; IMP from 5-formamido-1-(5-phospho-D-ribosyl)imidazole-4-carboxamide: step 1/1. This is Bifunctional purine biosynthesis protein PurH from Cupriavidus necator (strain ATCC 17699 / DSM 428 / KCTC 22496 / NCIMB 10442 / H16 / Stanier 337) (Ralstonia eutropha).